A 173-amino-acid polypeptide reads, in one-letter code: Bifunctional protein PyrR (173 aa).

The PRPP-binding signature appears at 93 to 105 (VILVDDVLYTGRT).

It belongs to the purine/pyrimidine phosphoribosyltransferase family. PyrR subfamily. As to quaternary structure, homodimer and homohexamer; in equilibrium.

It catalyses the reaction UMP + diphosphate = 5-phospho-alpha-D-ribose 1-diphosphate + uracil. Functionally, regulates transcriptional attenuation of the pyrimidine nucleotide (pyr) operon by binding in a uridine-dependent manner to specific sites on pyr mRNA. This disrupts an antiterminator hairpin in the RNA and favors formation of a downstream transcription terminator, leading to a reduced expression of downstream genes. Its function is as follows. Also displays a weak uracil phosphoribosyltransferase activity which is not physiologically significant. The chain is Bifunctional protein PyrR from Streptococcus pneumoniae (strain 70585).